Here is a 105-residue protein sequence, read N- to C-terminus: UPF0145 protein CCNA_02462 (105 aa).

This sequence belongs to the UPF0145 family.

The protein is UPF0145 protein CCNA_02462 of Caulobacter vibrioides (strain NA1000 / CB15N) (Caulobacter crescentus).